A 1228-amino-acid polypeptide reads, in one-letter code: Clustered mitochondria protein homolog (1228 aa).

A Clu domain is found at 298–557; the sequence is PSSLPSNSID…DNNPLDVGFA (260 aa). One copy of the TPR 1 repeat lies at 486–519; it reads CYGFDEASNKVIADAEFGSSLDDFAKVFHLKKHE. Residues 671–702 adopt a coiled-coil conformation; that stretch reads LGRVIELAEQELEAQRALREAHLQQVEADNKE. 2 TPR repeats span residues 982–1015 and 1108–1141; these read AESY…YERV and AVNE…FSKE.

Belongs to the CLU family. In terms of assembly, may associate with the eukaryotic translation initiation factor 3 (eIF-3) complex.

The protein resides in the cytoplasm. MRNA-binding protein involved in proper cytoplasmic distribution of mitochondria. This is Clustered mitochondria protein homolog from Eremothecium gossypii (strain ATCC 10895 / CBS 109.51 / FGSC 9923 / NRRL Y-1056) (Yeast).